Here is a 380-residue protein sequence, read N- to C-terminus: Cytochrome b (380 aa).

The next 4 membrane-spanning stretches (helical) occupy residues 33-53, 77-98, 113-133, and 178-198; these read FGSL…FLAM, WLIR…YLHI, WNVG…GYVL, and FFAF…LHLL. Heme b is bound by residues histidine 83 and histidine 97. 2 residues coordinate heme b: histidine 182 and histidine 196. Position 201 (histidine 201) interacts with a ubiquinone. 4 helical membrane-spanning segments follow: residues 226–246, 288–308, 320–340, and 347–367; these read YKDL…ALFS, LGGV…PFLH, ASQF…WIGG, and FIII…VLFP.

The protein belongs to the cytochrome b family. As to quaternary structure, the cytochrome bc1 complex contains 3 respiratory subunits (MT-CYB, CYC1 and UQCRFS1), 2 core proteins (UQCRC1 and UQCRC2) and probably 6 low-molecular weight proteins. The cofactor is heme b.

Its subcellular location is the mitochondrion inner membrane. In terms of biological role, component of the ubiquinol-cytochrome c reductase complex (complex III or cytochrome b-c1 complex) that is part of the mitochondrial respiratory chain. The b-c1 complex mediates electron transfer from ubiquinol to cytochrome c. Contributes to the generation of a proton gradient across the mitochondrial membrane that is then used for ATP synthesis. The polypeptide is Cytochrome b (mt-cyb) (Scomber scombrus (Atlantic mackerel)).